The sequence spans 575 residues: Acetylcholine receptor subunit beta-type acr-2 (575 aa).

An N-terminal signal peptide occupies residues M1–C20. The Extracellular segment spans residues N21 to V270. The tract at residues F31–G57 is disordered. A compositionally biased stretch (low complexity) spans D38 to S50. N-linked (GlcNAc...) asparagine glycosylation is found at N41, N42, N80, and N131. C185 and C199 form a disulfide bridge. A run of 3 helical transmembrane segments spans residues I271–V291, L299–P319, and L331–I351. The Cytoplasmic segment spans residues Y352–R527. The chain crosses the membrane as a helical span at residues L528–A548.

Belongs to the ligand-gated ion channel (TC 1.A.9) family. Acetylcholine receptor (TC 1.A.9.1) subfamily. Component of nicotinic acetylcholine receptor. In cholinergic motoneurons, composed of 2 non-alpha subunits acr-2 and acr-3, and 3 alpha subunits unc-38, unc-63 and acr-12. In terms of tissue distribution, specifically expressed in cholinergic ventral cord motoneurons of the VA, VB, DA and DB classes but not AS and VC classes. Expressed in PVQ and DVC neurons in the tail.

It is found in the postsynaptic cell membrane. Its subcellular location is the cell membrane. Functionally, non-alpha subunit of nicotinic acetylcholine receptor (nAChR). Acts in cholinergic motoneurons to regulate presynaptic neurotransmitter release, thereby ensuring normal level of excitation of cholinergic motoneurons during locomotion. This Caenorhabditis elegans protein is Acetylcholine receptor subunit beta-type acr-2 (acr-2).